A 297-amino-acid polypeptide reads, in one-letter code: HTH-type transcriptional regulator PerR (297 aa).

The HTH lysR-type domain occupies alanine 7–threonine 64. The segment at residues phenylalanine 24–lysine 44 is a DNA-binding region (H-T-H motif).

The protein belongs to the LysR transcriptional regulatory family.

In terms of biological role, apparent regulatory gene involved in peroxide resistance in stationary phase. The polypeptide is HTH-type transcriptional regulator PerR (perR) (Escherichia coli (strain K12)).